Reading from the N-terminus, the 858-residue chain is Zinc finger protein ZXDC (858 aa).

Disordered stretches follow at residues 1 to 127 (MDLP…APAG) and 151 to 174 (PGPA…STPG). Low complexity-rich tracts occupy residues 23–35 (PLRR…GASP), 84–97 (GGAA…QEAE), and 151–171 (PGPA…SGPS). Phosphoserine is present on Ser-34. Thr-172 is subject to Phosphothreonine. C2H2-type zinc fingers lie at residues 175 to 199 (YRCP…LLTH), 208 to 232 (FKCP…LQSH), 238 to 262 (FGCP…MKGH), 268 to 290 (FKCE…QRSH), 297 to 321 (YKCD…NRAH), 328 to 352 (FSCS…LRSH), 358 to 382 (FICD…RRKH), 388 to 412 (FTCP…SITH), 418 to 442 (FECP…SKKH), and 451 to 476 (SRCP…VRQH). The required for transcriptional activation stretch occupies residues 579–688 (DSPLVLGTAA…HGLPQSTLPS (110 aa)). Lys-660 participates in a covalent cross-link: Glycyl lysine isopeptide (Lys-Gly) (interchain with G-Cter in SUMO). Disordered regions lie at residues 660–696 (KVEP…HGAQ), 726–756 (KEKK…SPPH), and 837–858 (GGPA…QDLQ). Ser-665 is subject to Phosphoserine. Polar residues predominate over residues 675 to 687 (QEGSHGLPQSTLP). An interaction with CIITA region spans residues 781–858 (PAAGVQCGAQ…GSTINLQDLQ (78 aa)). Residues 847–858 (FPGSTINLQDLQ) show a composition bias toward polar residues.

This sequence belongs to the ZXD family. In terms of assembly, self-associates. Interacts with ZXDA and CIITA. Post-translationally, sumoylated at Lys-660 with SUMO1, SUMO2 and SUMO3; sumoylation enhances the activity of the transcriptional activation domain. Expressed at high levels in heart, kidney, liver and testis, at moderate levels in brain and stomach, and at low levels in lung, muscle, placenta, small intestine and spleen.

It localises to the nucleus. In terms of biological role, cooperates with CIITA to promote transcription of MHC class I and MHC class II genes. The polypeptide is Zinc finger protein ZXDC (ZXDC) (Homo sapiens (Human)).